Consider the following 596-residue polypeptide: UvrABC system protein C (596 aa).

The GIY-YIG domain maps to Ser16–Val95. The UVR domain maps to Ser209–Leu244.

The protein belongs to the UvrC family. As to quaternary structure, interacts with UvrB in an incision complex.

The protein localises to the cytoplasm. The UvrABC repair system catalyzes the recognition and processing of DNA lesions. UvrC both incises the 5' and 3' sides of the lesion. The N-terminal half is responsible for the 3' incision and the C-terminal half is responsible for the 5' incision. This chain is UvrABC system protein C, found in Cytophaga hutchinsonii (strain ATCC 33406 / DSM 1761 / CIP 103989 / NBRC 15051 / NCIMB 9469 / D465).